The primary structure comprises 739 residues: Phosphoribosylformylglycinamidine synthase subunit PurL (739 aa).

Residue His53 is part of the active site. Tyr56 and Lys95 together coordinate ATP. Position 97 (Glu97) interacts with Mg(2+). Substrate contacts are provided by residues 98–101 (SHNH) and Arg120. His99 acts as the Proton acceptor in catalysis. Residue Asp121 coordinates Mg(2+). Substrate is bound at residue Gln244. Position 274 (Asp274) interacts with Mg(2+). 318-320 (ESQ) is a substrate binding site. 2 residues coordinate ATP: Asp501 and Gly538. Asn539 lines the Mg(2+) pocket. Ser541 contacts substrate.

The protein belongs to the FGAMS family. In terms of assembly, monomer. Part of the FGAM synthase complex composed of 1 PurL, 1 PurQ and 2 PurS subunits.

Its subcellular location is the cytoplasm. It catalyses the reaction N(2)-formyl-N(1)-(5-phospho-beta-D-ribosyl)glycinamide + L-glutamine + ATP + H2O = 2-formamido-N(1)-(5-O-phospho-beta-D-ribosyl)acetamidine + L-glutamate + ADP + phosphate + H(+). It participates in purine metabolism; IMP biosynthesis via de novo pathway; 5-amino-1-(5-phospho-D-ribosyl)imidazole from N(2)-formyl-N(1)-(5-phospho-D-ribosyl)glycinamide: step 1/2. Its function is as follows. Part of the phosphoribosylformylglycinamidine synthase complex involved in the purines biosynthetic pathway. Catalyzes the ATP-dependent conversion of formylglycinamide ribonucleotide (FGAR) and glutamine to yield formylglycinamidine ribonucleotide (FGAM) and glutamate. The FGAM synthase complex is composed of three subunits. PurQ produces an ammonia molecule by converting glutamine to glutamate. PurL transfers the ammonia molecule to FGAR to form FGAM in an ATP-dependent manner. PurS interacts with PurQ and PurL and is thought to assist in the transfer of the ammonia molecule from PurQ to PurL. This Listeria monocytogenes serovar 1/2a (strain ATCC BAA-679 / EGD-e) protein is Phosphoribosylformylglycinamidine synthase subunit PurL.